The chain runs to 444 residues: Elongation factor 1-alpha (444 aa).

Positions 14 to 235 (KPHLNLAIIG…ALDAIEPPPR (222 aa)) constitute a tr-type G domain. The interval 23 to 30 (GHVDHGKS) is G1. Residue 23–30 (GHVDHGKS) coordinates GTP. Serine 30 is a binding site for Mg(2+). A G2 region spans residues 79–83 (GVTIE). Residues 100–103 (DLPG) are G3. Residues 100 to 104 (DLPGH) and 162 to 165 (NKMD) contribute to the GTP site. A G4 region spans residues 162 to 165 (NKMD). The interval 201–203 (SAV) is G5.

It belongs to the TRAFAC class translation factor GTPase superfamily. Classic translation factor GTPase family. EF-Tu/EF-1A subfamily.

It localises to the cytoplasm. It catalyses the reaction GTP + H2O = GDP + phosphate + H(+). Its function is as follows. GTP hydrolase that promotes the GTP-dependent binding of aminoacyl-tRNA to the A-site of ribosomes during protein biosynthesis. The sequence is that of Elongation factor 1-alpha from Caldivirga maquilingensis (strain ATCC 700844 / DSM 13496 / JCM 10307 / IC-167).